The sequence spans 381 residues: 3-hydroxyisobutyryl-CoA hydrolase, mitochondrial (381 aa).

The N-terminal 25 residues, 1-25, are a transit peptide targeting the mitochondrion; it reads MDRLLTISNHIGKNIRQFSTSTEEV. Substrate is bound by residues E116, G141, E164, and D172.

This sequence belongs to the enoyl-CoA hydratase/isomerase family.

The protein resides in the mitochondrion. The catalysed reaction is 3-hydroxy-2-methylpropanoyl-CoA + H2O = 3-hydroxy-2-methylpropanoate + CoA + H(+). Its pathway is amino-acid degradation; L-valine degradation. In terms of biological role, hydrolyzes 3-hydroxyisobutyryl-CoA (HIBYL-CoA), a saline catabolite. This Dictyostelium discoideum (Social amoeba) protein is 3-hydroxyisobutyryl-CoA hydrolase, mitochondrial (hibch).